The following is a 616-amino-acid chain: Chaperone protein HscA homolog (616 aa).

Belongs to the heat shock protein 70 family.

Chaperone involved in the maturation of iron-sulfur cluster-containing proteins. Has a low intrinsic ATPase activity which is markedly stimulated by HscB. The protein is Chaperone protein HscA homolog of Mannheimia succiniciproducens (strain KCTC 0769BP / MBEL55E).